Consider the following 212-residue polypeptide: Adenylate kinase (212 aa).

10 to 15 (GAGKGT) lines the ATP pocket. The segment at 30 to 59 (STGDMFRAAMANQTEMGRLAKSYIDKGELV) is NMP. AMP-binding positions include threonine 31, arginine 36, 57–59 (ELV), 86–89 (GYPR), and glutamine 93. An LID region spans residues 127–159 (GRIINRKTGETFHKVFNPPVDYKEEDYYQREDD). ATP-binding positions include arginine 128 and 137 to 138 (TF). Residues arginine 156 and arginine 167 each coordinate AMP. Glutamine 195 is an ATP binding site.

This sequence belongs to the adenylate kinase family. Monomer.

It localises to the cytoplasm. The enzyme catalyses AMP + ATP = 2 ADP. Its pathway is purine metabolism; AMP biosynthesis via salvage pathway; AMP from ADP: step 1/1. Catalyzes the reversible transfer of the terminal phosphate group between ATP and AMP. Plays an important role in cellular energy homeostasis and in adenine nucleotide metabolism. This is Adenylate kinase from Streptococcus pyogenes serotype M3 (strain ATCC BAA-595 / MGAS315).